A 597-amino-acid polypeptide reads, in one-letter code: Cytosolic Fe-S cluster assembly factor nar1 (597 aa).

6 residues coordinate [4Fe-4S] cluster: Cys20, Cys61, Cys64, Cys67, Cys209, and Cys264. Residues 419-447 (PARASRLPGARQSATSAGGSRRQLASRNA) form a disordered region. Positions 430–447 (QSATSAGGSRRQLASRNA) are enriched in polar residues. [4Fe-4S] cluster contacts are provided by Cys464 and Cys468. Positions 482 to 504 (EAASNMSVESQTEPPEAALKPTP) are disordered. The span at 485–494 (SNMSVESQTE) shows a compositional bias: polar residues.

The protein belongs to the NARF family.

Component of the cytosolic Fe/S protein assembly machinery. Required for maturation of extramitochondrial Fe/S proteins. May play a role in the transfer of pre-assembled Fe/S clusters to target apoproteins. In Aspergillus clavatus (strain ATCC 1007 / CBS 513.65 / DSM 816 / NCTC 3887 / NRRL 1 / QM 1276 / 107), this protein is Cytosolic Fe-S cluster assembly factor nar1 (nar1).